The primary structure comprises 282 residues: Probable iron transport system membrane protein HI_0360 (282 aa).

8 helical membrane-spanning segments follow: residues 17 to 37 (AMIL…YLML), 63 to 83 (LPYA…ILWI), 93 to 113 (AVIG…VSLN), 140 to 160 (IIIG…LLIF), 164 to 184 (TQAI…FTLL), 186 to 206 (ACVV…MVVT), 223 to 243 (IIAI…SYYL), and 245 to 265 (GATG…AFLF).

It belongs to the ABC-3 integral membrane protein family.

The protein resides in the cell inner membrane. Part of an ATP-driven transport system HI_0359/HI_0360/HI_0361/HI_0362 for iron. This Haemophilus influenzae (strain ATCC 51907 / DSM 11121 / KW20 / Rd) protein is Probable iron transport system membrane protein HI_0360.